Consider the following 166-residue polypeptide: Ribosome-binding factor A (166 aa).

The tract at residues 122 to 166 (LASTAEHAGDADPYRVDTEDDDDDTDGADAEARSDADVRRGPQSG) is disordered. Residues 128-138 (HAGDADPYRVD) are compositionally biased toward basic and acidic residues. Over residues 139 to 150 (TEDDDDDTDGAD) the composition is skewed to acidic residues. Over residues 151–166 (AEARSDADVRRGPQSG) the composition is skewed to basic and acidic residues.

The protein belongs to the RbfA family. In terms of assembly, monomer. Binds 30S ribosomal subunits, but not 50S ribosomal subunits or 70S ribosomes.

Its subcellular location is the cytoplasm. One of several proteins that assist in the late maturation steps of the functional core of the 30S ribosomal subunit. Associates with free 30S ribosomal subunits (but not with 30S subunits that are part of 70S ribosomes or polysomes). Required for efficient processing of 16S rRNA. May interact with the 5'-terminal helix region of 16S rRNA. In Saccharopolyspora erythraea (strain ATCC 11635 / DSM 40517 / JCM 4748 / NBRC 13426 / NCIMB 8594 / NRRL 2338), this protein is Ribosome-binding factor A.